Reading from the N-terminus, the 228-residue chain is Lipoprotein-releasing system ATP-binding protein LolD (228 aa).

The 220-residue stretch at 9-228 (LEAHDIQKNF…ELINGCLYRR (220 aa)) folds into the ABC transporter domain. Position 44 to 51 (44 to 51 (GRSGEGKS)) interacts with ATP.

It belongs to the ABC transporter superfamily. Lipoprotein translocase (TC 3.A.1.125) family. The complex is composed of two ATP-binding proteins (LolD) and two transmembrane proteins (LolC and LolE).

It localises to the cell inner membrane. Its function is as follows. Part of the ABC transporter complex LolCDE involved in the translocation of mature outer membrane-directed lipoproteins, from the inner membrane to the periplasmic chaperone, LolA. Responsible for the formation of the LolA-lipoprotein complex in an ATP-dependent manner. This is Lipoprotein-releasing system ATP-binding protein LolD from Protochlamydia amoebophila (strain UWE25).